A 524-amino-acid polypeptide reads, in one-letter code: Probable myosin-binding protein 5 (524 aa).

A helical transmembrane segment spans residues 20 to 40 (FLIYALLEWILIIILFIDGFL). Residues 299 to 397 (SILQHLNRQV…ELEAGIEVYR (99 aa)) form the GTD-binding domain. Positions 462-490 (SRKDMLVKEISEITERLNAIESKGELLQQ) form a coiled coil.

The protein localises to the membrane. Functionally, probable membrane-anchored myosin receptors. The chain is Probable myosin-binding protein 5 from Arabidopsis thaliana (Mouse-ear cress).